The chain runs to 166 residues: Phosphopantetheine adenylyltransferase (166 aa).

Ser-11 lines the substrate pocket. ATP-binding positions include 11 to 12 (SF) and His-19. Substrate is bound by residues Lys-43, Ala-76, and Arg-90. Residues 91 to 93 (GLR), Glu-101, and 126 to 132 (LQPVSSS) each bind ATP.

It belongs to the bacterial CoaD family. As to quaternary structure, homohexamer. Mg(2+) serves as cofactor.

The protein localises to the cytoplasm. The enzyme catalyses (R)-4'-phosphopantetheine + ATP + H(+) = 3'-dephospho-CoA + diphosphate. The protein operates within cofactor biosynthesis; coenzyme A biosynthesis; CoA from (R)-pantothenate: step 4/5. Reversibly transfers an adenylyl group from ATP to 4'-phosphopantetheine, yielding dephospho-CoA (dPCoA) and pyrophosphate. The chain is Phosphopantetheine adenylyltransferase from Streptococcus equi subsp. equi (strain 4047).